An 89-amino-acid polypeptide reads, in one-letter code: Protein S100-A8 (89 aa).

EF-hand domains lie at 13–48 (IDVYHNYSNIQGNHHALYKNDFKKMVTTECPQFVQN) and 46–81 (VQNINIENLFRELDINSDNAINFEEFLAMVIKVGVA). 2 residues coordinate Zn(2+): H17 and H27. Residue D33 coordinates Ca(2+). C42 is modified (S-nitrosocysteine). D59, N61, D63, and E70 together coordinate Ca(2+). H83 contributes to the Zn(2+) binding site.

The protein belongs to the S-100 family. As to quaternary structure, homodimer. Preferentially exists as a heterodimer or heterotetramer with S100A9 known as calprotectin (S100A8/A9). Calprotectin (S100A8/9) interacts with CEACAM3 and tubulin filaments in a calcium-dependent manner. Heterotetrameric calprotectin (S100A8/A9) interacts with ANXA6 and associates with tubulin filaments in activated monocytes. S100A8 and calprotectin (S100A8/9) interact with NCF2/P67PHOX, RAC1 and RAC2. Calprotectin (S100A8/9) interacts with CYBA and CYBB. S100A8 interacts with AGER, ATP2A2 and with the heterodimeric complex formed by TLR4 and LY96. Calprotectin (S100A8/9) interacts with NOS2 to form the iNOS-S100A8/A9 transnitrosylase complex. Calprotectin (S100A8/9) interacts with CD69.

The protein localises to the secreted. It localises to the cytoplasm. The protein resides in the cytoskeleton. It is found in the cell membrane. Calprotectin (S100A8/A9) activity on TLR4 signaling is inhibited by paquinimod. S100A8 is a calcium- and zinc-binding protein which plays a prominent role in the regulation of inflammatory processes and immune response. It can induce neutrophil chemotaxis and adhesion. Predominantly found as calprotectin (S100A8/A9) which has a wide plethora of intra- and extracellular functions. The intracellular functions include: facilitating leukocyte arachidonic acid trafficking and metabolism, modulation of the tubulin-dependent cytoskeleton during migration of phagocytes and activation of the neutrophilic NADPH-oxidase. Also participates in regulatory T-cell differentiation together with CD69. Activates NADPH-oxidase by facilitating the enzyme complex assembly at the cell membrane, transferring arachidonic acid, an essential cofactor, to the enzyme complex and S100A8 contributes to the enzyme assembly by directly binding to NCF2/P67PHOX. The extracellular functions involve pro-inflammatory, antimicrobial, oxidant-scavenging and apoptosis-inducing activities. Its pro-inflammatory activity includes recruitment of leukocytes, promotion of cytokine and chemokine production, and regulation of leukocyte adhesion and migration. Acts as an alarmin or a danger associated molecular pattern (DAMP) molecule and stimulates innate immune cells via binding to pattern recognition receptors such as Toll-like receptor 4 (TLR4) and receptor for advanced glycation endproducts (AGER). Binding to TLR4 and AGER activates the MAP-kinase and NF-kappa-B signaling pathways resulting in the amplification of the pro-inflammatory cascade. Has antimicrobial activity towards bacteria and fungi and exerts its antimicrobial activity probably via chelation of Zn(2+) which is essential for microbial growth. Can induce cell death via autophagy and apoptosis and this occurs through the cross-talk of mitochondria and lysosomes via reactive oxygen species (ROS) and the process involves BNIP3. Can regulate neutrophil number and apoptosis by an anti-apoptotic effect; regulates cell survival via ITGAM/ITGB and TLR4 and a signaling mechanism involving MEK-ERK. Its role as an oxidant scavenger has a protective role in preventing exaggerated tissue damage by scavenging oxidants. The iNOS-S100A8/A9 transnitrosylase complex is proposed to direct selective inflammatory stimulus-dependent S-nitrosylation of multiple targets such as GAPDH, ANXA5, EZR, MSN and VIM by recognizing a [IL]-x-C-x-x-[DE] motif; S100A8 seems to contribute to S-nitrosylation site selectivity. In terms of biological role, (Microbial infection) Upon infection by murine coronavirus (MHV-A59), induces expansion of aberrant immature neutrophils in a TLR4-dependent manner. The chain is Protein S100-A8 from Mus musculus (Mouse).